A 113-amino-acid chain; its full sequence is UPF0482 protein YnfB (113 aa).

The first 28 residues, 1–28, serve as a signal peptide directing secretion; that stretch reads MKITLSKRIGLLAFLLPCALALSTTVHA.

The protein belongs to the UPF0482 family.

The protein is UPF0482 protein YnfB of Shigella flexneri serotype 5b (strain 8401).